The primary structure comprises 368 residues: Phosphate acyltransferase (368 aa).

It belongs to the PlsX family. In terms of assembly, homodimer. Probably interacts with PlsY.

The protein localises to the cytoplasm. It carries out the reaction a fatty acyl-[ACP] + phosphate = an acyl phosphate + holo-[ACP]. Its pathway is lipid metabolism; phospholipid metabolism. Functionally, catalyzes the reversible formation of acyl-phosphate (acyl-PO(4)) from acyl-[acyl-carrier-protein] (acyl-ACP). This enzyme utilizes acyl-ACP as fatty acyl donor, but not acyl-CoA. This Cereibacter sphaeroides (strain ATCC 17025 / ATH 2.4.3) (Rhodobacter sphaeroides) protein is Phosphate acyltransferase.